A 428-amino-acid chain; its full sequence is Enolase (428 aa).

(2R)-2-phosphoglycerate is bound at residue Q163. E205 serves as the catalytic Proton donor. Mg(2+) contacts are provided by D242, E286, and D313. (2R)-2-phosphoglycerate is bound by residues K338, R367, S368, and K389. The active-site Proton acceptor is the K338.

This sequence belongs to the enolase family. It depends on Mg(2+) as a cofactor.

The protein resides in the cytoplasm. Its subcellular location is the secreted. It is found in the cell surface. The enzyme catalyses (2R)-2-phosphoglycerate = phosphoenolpyruvate + H2O. The protein operates within carbohydrate degradation; glycolysis; pyruvate from D-glyceraldehyde 3-phosphate: step 4/5. Its function is as follows. Catalyzes the reversible conversion of 2-phosphoglycerate (2-PG) into phosphoenolpyruvate (PEP). It is essential for the degradation of carbohydrates via glycolysis. This Lactobacillus helveticus (strain DPC 4571) protein is Enolase.